Consider the following 239-residue polypeptide: Orotidine 5'-phosphate decarboxylase (239 aa).

Residues Asp11, Lys33, 60–69 (DLKFHDIPTT), Thr117, Arg178, Gln187, Gly207, and Arg208 contribute to the substrate site. Lys62 (proton donor) is an active-site residue.

This sequence belongs to the OMP decarboxylase family. Type 1 subfamily. As to quaternary structure, homodimer.

It catalyses the reaction orotidine 5'-phosphate + H(+) = UMP + CO2. Its pathway is pyrimidine metabolism; UMP biosynthesis via de novo pathway; UMP from orotate: step 2/2. Its function is as follows. Catalyzes the decarboxylation of orotidine 5'-monophosphate (OMP) to uridine 5'-monophosphate (UMP). This is Orotidine 5'-phosphate decarboxylase from Nitrosospira multiformis (strain ATCC 25196 / NCIMB 11849 / C 71).